The chain runs to 971 residues: MSRPLSKNTEREPKQINGHQNNLSNHKHLSKSLEQEMKAFLIDEKELHLYDDLTKVNPVTTATVLKCLQARYSAGVFYTNAGCTVVAVNPFQPVYKLYSSEVMKDYHSTSNPQGCKPHIFTVAEQAYRNVQSQIQPVNQSIIVSGESGAGKTWTSRCLMKFYATVSASRCYITNEMVERIEGRVLDSNPVMEAFGNACTLRNNNSSRFGKYIQLQLNRAQQITGASIQTYLLEKTRVAHQAPLERNFHIFYQMFKGASRLEREEWNLPEKANFSWLPNYENNLEEDDFEVTKKAMLHLGIDQPTQNNIFKILSGLLHLGNIKFSDSVDESQPCEPLNYTQEFASIAANLLKIPVSHLLERLSIRTITAGKQQVFKKPCRKSECDTRRDCLAKTIYARLFEWLVTVINENICAESCRWNNFIGLLDVYGFESFPENNLEQLCINYANEKLQQHFVSHYLKSQQDEYAAEGLEWSFISYQDNQSCVDLLEGSPISIFSLLNEECRLNRSLDAGQLQSRLENALSHNKCIGRDKFSKKPNFIVSHYAGKVQYQIEDMAEKNKDPVPPELIQLLQESDDHLLQKLFPVDNNKLVYGATNNRAVGVTVVSKFKGSLESLMQILHSTTPHYIRCIKPNVDCQALVFRQEEVLMQLEACGIVETINISAAGFPIRISFENFVERYSVIAPRQSHMKTCFPLKKKQGSIEKTDQLSSKLHTILQAVLPKQCKDSTLSNSLVHCGTTKVFLTHLMVELLEERRLIAISSKAMCIQCCWRSYRQRKLAKQSKAATTIQAAVKGWLTKKYIKRMHSAATVIKRIWKKWKEKMEALAAAELDDSTEDVESTLFSSMLASPVKSLESSKTNLPDKIMTQSAILRFGTLGLVLYGAPAIRKYIVETDELKRNQNILMCLNMLHRNNRYKVTVNREEPGITSIRARPQGSIRFHYKRSPLHFANICPGKINCGITGFNEILLEKTV.

Residues 1–25 (MSRPLSKNTEREPKQINGHQNNLSN) form a disordered region. The region spanning 48–755 (HLYDDLTKVN…MVELLEERRL (708 aa)) is the Myosin motor domain. 145–152 (GESGAGKT) contributes to the ATP binding site. Residues 611–633 (LESLMQILHSTTPHYIRCIKPNV) form an actin-binding region. IQ domains are found at residues 758–787 (ISSKAMCIQCCWRSYRQRKLAKQSKAATTI) and 780–809 (QSKAATTIQAAVKGWLTKKYIKRMHSAATV). A myMOMA region region spans residues 826 to 971 (AAELDDSTED…FNEILLEKTV (146 aa)).

Belongs to the TRAFAC class myosin-kinesin ATPase superfamily. Myosin family. Myosin is a hexamer of 2 heavy chains and 4 light chains.

The protein localises to the mitochondrion outer membrane. Its subcellular location is the cytoplasm. The protein resides in the cytoskeleton. Its function is as follows. Actin-based motor molecule with ATPase activity that localizes to the mitochondrion outer membrane. Motor protein that moves towards the plus-end of actin filaments. Required for mitochondrial inheritance during mitosis. May be involved in mitochondrial transport or positioning. The polypeptide is Unconventional myosin-XIX (Xenopus laevis (African clawed frog)).